The chain runs to 396 residues: Septu protein PtuA (396 aa).

In terms of biological role, component of antiviral defense system Septu type I, composed of PtuA and PtuB. Expression of Septu type I in B.subtilis (strain BEST7003) confers resistance to phages SBSphiC and SBSphiJ. May be an ATPase. The polypeptide is Septu protein PtuA (Bacillus thuringiensis).